Consider the following 671-residue polypeptide: TBC1 domain family member 15 (671 aa).

An N-acetylalanine modification is found at A2. Phosphoserine is present on residues S23, S32, S70, S205, and S257. The 211-residue stretch at G329–L539 folds into the Rab-GAP TBC domain. 2 positions are modified to phosphoserine: S623 and S655. The disordered stretch occupies residues E650 to A671. T669 bears the Phosphothreonine mark.

As to quaternary structure, interacts with non-phosphorylated form of RAB8A; phosphorylation of RAB8A at 'Thr-72' disrupts this interaction. Interacts with ARMC12. As to expression, ubiquitous, with highest expression in heart, liver and testis and lower expression in brain, spleen, lung, kidney and skeletal muscle.

The protein resides in the cytoplasm. Functionally, acts as a GTPase activating protein for RAB7A. Does not act on RAB4, RAB5 or RAB6. This Mus musculus (Mouse) protein is TBC1 domain family member 15 (Tbc1d15).